The sequence spans 273 residues: Large ribosomal subunit protein uL2 (273 aa).

A disordered region spans residues 224–263 (AMNPVDHPHGGGEGRNFGKHPVTPWGLQTKGKKTRKNKRT). Basic residues predominate over residues 253–263 (KGKKTRKNKRT).

It belongs to the universal ribosomal protein uL2 family. In terms of assembly, part of the 50S ribosomal subunit. Forms a bridge to the 30S subunit in the 70S ribosome.

One of the primary rRNA binding proteins. Required for association of the 30S and 50S subunits to form the 70S ribosome, for tRNA binding and peptide bond formation. It has been suggested to have peptidyltransferase activity; this is somewhat controversial. Makes several contacts with the 16S rRNA in the 70S ribosome. The chain is Large ribosomal subunit protein uL2 from Buchnera aphidicola subsp. Schizaphis graminum (strain Sg).